The primary structure comprises 128 residues: Lutropin subunit beta (128 aa).

The first 20 residues, 1–20 (MERLQGLLLWLLLSPSVVWA), serve as a signal peptide directing secretion. 5 disulfide bridges follow: cysteine 29/cysteine 77, cysteine 43/cysteine 92, cysteine 54/cysteine 108, cysteine 58/cysteine 110, and cysteine 113/cysteine 120. Asparagine 33 is a glycosylation site (N-linked (GlcNAc...) asparagine).

This sequence belongs to the glycoprotein hormones subunit beta family. As to quaternary structure, heterodimer of a common alpha chain and a unique beta chain which confers biological specificity to thyrotropin, lutropin, follitropin and gonadotropin.

It localises to the secreted. In terms of biological role, promotes spermatogenesis and ovulation by stimulating the testes and ovaries to synthesize steroids. The protein is Lutropin subunit beta (LHB) of Phodopus sungorus (Striped hairy-footed hamster).